The following is a 160-amino-acid chain: MSDEEHHFESKADAGASKTYPQQAGTIRKNGYIVIKGRPCKVVEVSTSKTGKHGHAKCHFVAIDIFNAKKLEDIVPSSHNCDVPHVNRTDYQLIDISEDGFVSLLTENGNTKDDLRLPTDDTLLNQVKGGFEEGKDLVLSVMSAMGEEQICAVKDIGTKT.

Residues M1–A12 are compositionally biased toward basic and acidic residues. Residues M1 to P21 form a disordered region. Hypusine is present on K52.

It belongs to the eIF-5A family. In terms of processing, lys-52 undergoes hypusination, a unique post-translational modification that consists in the addition of a butylamino group from spermidine to lysine side chain, leading to the formation of the unusual amino acid hypusine. eIF-5As are the only known proteins to undergo this modification, which is essential for their function.

Translation factor that promotes translation elongation and termination, particularly upon ribosome stalling at specific amino acid sequence contexts. Binds between the exit (E) and peptidyl (P) site of the ribosome and promotes rescue of stalled ribosome: specifically required for efficient translation of polyproline-containing peptides as well as other motifs that stall the ribosome. Acts as a ribosome quality control (RQC) cofactor by joining the RQC complex to facilitate peptidyl transfer during CAT tailing step. The polypeptide is Eukaryotic translation initiation factor 5A-4 (Solanum lycopersicum (Tomato)).